The chain runs to 192 residues: Small ribosomal subunit protein uS4B (192 aa).

Residues 83–145 enclose the S4 RNA-binding domain; it reads RRLDNLVYRL…SRKIQTYASN (63 aa).

This sequence belongs to the universal ribosomal protein uS4 family. As to quaternary structure, part of the 30S ribosomal subunit. Contacts protein S5. The interaction surface between S4 and S5 is involved in control of translational fidelity.

Its function is as follows. One of the primary rRNA binding proteins, it binds directly to 16S rRNA where it nucleates assembly of the body of the 30S subunit. Functionally, with S5 and S12 plays an important role in translational accuracy. This is Small ribosomal subunit protein uS4B (rpsD2) from Clostridium acetobutylicum (strain ATCC 824 / DSM 792 / JCM 1419 / IAM 19013 / LMG 5710 / NBRC 13948 / NRRL B-527 / VKM B-1787 / 2291 / W).